The primary structure comprises 379 residues: Phospho-N-acetylmuramoyl-pentapeptide-transferase (379 aa).

10 helical membrane passes run 27–47, 76–96, 100–120, 135–155, 185–205, 218–238, 255–275, 283–303, 307–327, and 356–376; these read FRTA…GPAV, TMGG…WADL, FVWI…TDDY, AKMG…VLVQ, PHIW…VLVG, GLAI…TYVS, VGEL…FLWY, FMGD…AVII, LLLP…ILQV, and KIIV…LTTL.

Belongs to the glycosyltransferase 4 family. MraY subfamily. It depends on Mg(2+) as a cofactor.

The protein resides in the cell inner membrane. It carries out the reaction UDP-N-acetyl-alpha-D-muramoyl-L-alanyl-gamma-D-glutamyl-meso-2,6-diaminopimeloyl-D-alanyl-D-alanine + di-trans,octa-cis-undecaprenyl phosphate = di-trans,octa-cis-undecaprenyl diphospho-N-acetyl-alpha-D-muramoyl-L-alanyl-D-glutamyl-meso-2,6-diaminopimeloyl-D-alanyl-D-alanine + UMP. Its pathway is cell wall biogenesis; peptidoglycan biosynthesis. Catalyzes the initial step of the lipid cycle reactions in the biosynthesis of the cell wall peptidoglycan: transfers peptidoglycan precursor phospho-MurNAc-pentapeptide from UDP-MurNAc-pentapeptide onto the lipid carrier undecaprenyl phosphate, yielding undecaprenyl-pyrophosphoryl-MurNAc-pentapeptide, known as lipid I. The protein is Phospho-N-acetylmuramoyl-pentapeptide-transferase of Koribacter versatilis (strain Ellin345).